Reading from the N-terminus, the 230-residue chain is Dephospho-CoA kinase (230 aa).

Residues leucine 3–arginine 206 enclose the DPCK domain. Glycine 8–serine 15 contacts ATP.

Belongs to the CoaE family.

It catalyses the reaction 3'-dephospho-CoA + ATP = ADP + CoA + H(+). It functions in the pathway cofactor biosynthesis; coenzyme A biosynthesis; CoA from (R)-pantothenate: step 5/5. In terms of biological role, catalyzes the phosphorylation of the 3'-hydroxyl group of dephosphocoenzyme A to form coenzyme A. In Oryza sativa subsp. japonica (Rice), this protein is Dephospho-CoA kinase.